The sequence spans 156 residues: 6,7-dimethyl-8-ribityllumazine synthase (156 aa).

5-amino-6-(D-ribitylamino)uracil contacts are provided by residues Phe23, 57–59 (AYE), and 81–83 (AII). 86-87 (GT) is a binding site for (2S)-2-hydroxy-3-oxobutyl phosphate. His89 acts as the Proton donor in catalysis. A 5-amino-6-(D-ribitylamino)uracil-binding site is contributed by Phe114. Arg128 contacts (2S)-2-hydroxy-3-oxobutyl phosphate.

Belongs to the DMRL synthase family.

The catalysed reaction is (2S)-2-hydroxy-3-oxobutyl phosphate + 5-amino-6-(D-ribitylamino)uracil = 6,7-dimethyl-8-(1-D-ribityl)lumazine + phosphate + 2 H2O + H(+). The protein operates within cofactor biosynthesis; riboflavin biosynthesis; riboflavin from 2-hydroxy-3-oxobutyl phosphate and 5-amino-6-(D-ribitylamino)uracil: step 1/2. Its function is as follows. Catalyzes the formation of 6,7-dimethyl-8-ribityllumazine by condensation of 5-amino-6-(D-ribitylamino)uracil with 3,4-dihydroxy-2-butanone 4-phosphate. This is the penultimate step in the biosynthesis of riboflavin. This Helicobacter pylori (strain Shi470) protein is 6,7-dimethyl-8-ribityllumazine synthase.